The sequence spans 420 residues: Serine--tRNA ligase (420 aa).

Position 225–227 (225–227) interacts with L-serine; the sequence is TLE. An ATP-binding site is contributed by 256 to 258; that stretch reads RQE. Glu-279 is an L-serine binding site. Residue 343–346 participates in ATP binding; the sequence is EVSS. Residue Thr-379 coordinates L-serine.

This sequence belongs to the class-II aminoacyl-tRNA synthetase family. Type-1 seryl-tRNA synthetase subfamily. Homodimer. The tRNA molecule binds across the dimer.

It is found in the cytoplasm. The catalysed reaction is tRNA(Ser) + L-serine + ATP = L-seryl-tRNA(Ser) + AMP + diphosphate + H(+). It catalyses the reaction tRNA(Sec) + L-serine + ATP = L-seryl-tRNA(Sec) + AMP + diphosphate + H(+). Its pathway is aminoacyl-tRNA biosynthesis; selenocysteinyl-tRNA(Sec) biosynthesis; L-seryl-tRNA(Sec) from L-serine and tRNA(Sec): step 1/1. Functionally, catalyzes the attachment of serine to tRNA(Ser). Is also able to aminoacylate tRNA(Sec) with serine, to form the misacylated tRNA L-seryl-tRNA(Sec), which will be further converted into selenocysteinyl-tRNA(Sec). The polypeptide is Serine--tRNA ligase (Mycoplasma pneumoniae (strain ATCC 29342 / M129 / Subtype 1) (Mycoplasmoides pneumoniae)).